Reading from the N-terminus, the 147-residue chain is Large ribosomal subunit protein uL13 (147 aa).

The segment at 128-147 (DQHPHGAQQPQPFEITQVAQ) is disordered.

The protein belongs to the universal ribosomal protein uL13 family. As to quaternary structure, part of the 50S ribosomal subunit.

Its function is as follows. This protein is one of the early assembly proteins of the 50S ribosomal subunit, although it is not seen to bind rRNA by itself. It is important during the early stages of 50S assembly. This chain is Large ribosomal subunit protein uL13, found in Streptomyces coelicolor (strain ATCC BAA-471 / A3(2) / M145).